Consider the following 276-residue polypeptide: Cell division protein FtsQ (276 aa).

The Cytoplasmic portion of the chain corresponds to 1-11; the sequence is MQYILKLKYYL. Residues 12-32 form a helical membrane-spanning segment; sequence YNITWKLVFICVMLVLLIVGI. Topologically, residues 33 to 276 are periplasmic; the sequence is HKNIKWVCDY…NVSKGSHDYD (244 aa). A POTRA domain is found at 45–115; it reads GPLSYIIVTG…NTLKINLIEY (71 aa).

Belongs to the FtsQ/DivIB family. FtsQ subfamily. As to quaternary structure, part of a complex composed of FtsB, FtsL and FtsQ.

It localises to the cell inner membrane. In terms of biological role, essential cell division protein. May link together the upstream cell division proteins, which are predominantly cytoplasmic, with the downstream cell division proteins, which are predominantly periplasmic. May control correct divisome assembly. The protein is Cell division protein FtsQ of Blochmanniella floridana.